The chain runs to 732 residues: Catalase-peroxidase (732 aa).

An N-terminal signal peptide occupies residues 1–15 (MSTESKCPFAGGAYA). Residues 96–219 (WHSAGTYRIY…LGAVQMGLIY (124 aa)) constitute a cross-link (tryptophyl-tyrosyl-methioninium (Trp-Tyr) (with M-245)). The active-site Proton acceptor is the histidine 97. Positions 219–245 (YVNPEGPNGNPDPLASARDIRETFARM) form a cross-link, tryptophyl-tyrosyl-methioninium (Tyr-Met) (with W-96). Histidine 260 contributes to the heme b binding site.

It belongs to the peroxidase family. Peroxidase/catalase subfamily. Homodimer or homotetramer. It depends on heme b as a cofactor. In terms of processing, formation of the three residue Trp-Tyr-Met cross-link is important for the catalase, but not the peroxidase activity of the enzyme.

The enzyme catalyses H2O2 + AH2 = A + 2 H2O. It carries out the reaction 2 H2O2 = O2 + 2 H2O. Its function is as follows. Bifunctional enzyme with both catalase and broad-spectrum peroxidase activity. The polypeptide is Catalase-peroxidase (Acidobacterium capsulatum (strain ATCC 51196 / DSM 11244 / BCRC 80197 / JCM 7670 / NBRC 15755 / NCIMB 13165 / 161)).